Here is a 217-residue protein sequence, read N- to C-terminus: Cytidylate kinase (217 aa).

10–18 (GPAGAGKST) is an ATP binding site.

It belongs to the cytidylate kinase family. Type 1 subfamily.

The protein resides in the cytoplasm. The enzyme catalyses CMP + ATP = CDP + ADP. It carries out the reaction dCMP + ATP = dCDP + ADP. The protein is Cytidylate kinase of Alkaliphilus oremlandii (strain OhILAs) (Clostridium oremlandii (strain OhILAs)).